The sequence spans 168 residues: Venom nerve growth factor (168 aa).

The signal sequence occupies residues 1-18 (MSMLCYTLIIAFLIGIWA). Residues 19–123 (APKSEDNVSL…ADSLNRNIRA (105 aa)) constitute a propeptide that is removed on maturation. Residue Asn-25 is glycosylated (N-linked (GlcNAc...) asparagine). Residues 48-70 (LKTSQNTDQHSPAPKKAEDQEFG) are disordered. The N-linked (GlcNAc...) asparagine glycan is linked to Asn-148.

The protein belongs to the NGF-beta family. In terms of assembly, homodimer; non-covalently linked. As to expression, expressed by the venom gland.

The protein resides in the secreted. Functionally, nerve growth factor is important for the development and maintenance of the sympathetic and sensory nervous systems. It stimulates division and differentiation of sympathetic and embryonic sensory neurons as well as basal forebrain cholinergic neurons in the brain. Its relevance in the snake venom is not clear. However, it has been shown to inhibit metalloproteinase-dependent proteolysis of platelet glycoprotein Ib alpha, suggesting a metalloproteinase inhibition to prevent metalloprotease autodigestion and/or protection against prey proteases. The sequence is that of Venom nerve growth factor from Echis ocellatus (Ocellated saw-scaled viper).